A 64-amino-acid polypeptide reads, in one-letter code: Large ribosomal subunit protein bL35 (64 aa).

2 stretches are compositionally biased toward basic residues: residues 1–26 (MPKM…KRSK) and 33–44 (LTKKSPKRKRKL). The segment at 1–44 (MPKMKTHRGAAKRFKKTGTGKIKRSKAYTSHILTKKSPKRKRKL) is disordered.

It belongs to the bacterial ribosomal protein bL35 family.

This chain is Large ribosomal subunit protein bL35, found in Alkaliphilus oremlandii (strain OhILAs) (Clostridium oremlandii (strain OhILAs)).